The chain runs to 275 residues: Putative phosphoenolpyruvate synthase regulatory protein (275 aa).

153–160 serves as a coordination point for ADP; sequence GVSRSGKT.

It belongs to the pyruvate, phosphate/water dikinase regulatory protein family. PSRP subfamily.

It catalyses the reaction [pyruvate, water dikinase] + ADP = [pyruvate, water dikinase]-phosphate + AMP + H(+). It carries out the reaction [pyruvate, water dikinase]-phosphate + phosphate + H(+) = [pyruvate, water dikinase] + diphosphate. In terms of biological role, bifunctional serine/threonine kinase and phosphorylase involved in the regulation of the phosphoenolpyruvate synthase (PEPS) by catalyzing its phosphorylation/dephosphorylation. The polypeptide is Putative phosphoenolpyruvate synthase regulatory protein (Nitrosomonas eutropha (strain DSM 101675 / C91 / Nm57)).